The sequence spans 63 residues: Male-specific sperm protein Mst84Da (63 aa).

It belongs to the MST(3)CGP family. In terms of tissue distribution, testis.

In Drosophila melanogaster (Fruit fly), this protein is Male-specific sperm protein Mst84Da (Mst84Da).